The sequence spans 416 residues: UBX domain-containing protein 4 (416 aa).

The region spanning 273–350 (KAISECLLRV…EFGSKTMLLF (78 aa)) is the UBX domain. The disordered stretch occupies residues 376 to 402 (TRTTPSVNTINKSNPQGPSDNATSIKK). Over residues 378 to 402 (TTPSVNTINKSNPQGPSDNATSIKK) the composition is skewed to polar residues.

It is found in the nucleus. It localises to the cytoplasm. Its function is as follows. Involved in CDC48-dependent protein degradation through the ubiquitin/proteasome pathway. This Saccharomyces cerevisiae (strain ATCC 204508 / S288c) (Baker's yeast) protein is UBX domain-containing protein 4 (UBX4).